We begin with the raw amino-acid sequence, 489 residues long: Glycogen synthase (489 aa).

Residue Arg-20 participates in ADP-alpha-D-glucose binding.

This sequence belongs to the glycosyltransferase 1 family. Bacterial/plant glycogen synthase subfamily.

The enzyme catalyses [(1-&gt;4)-alpha-D-glucosyl](n) + ADP-alpha-D-glucose = [(1-&gt;4)-alpha-D-glucosyl](n+1) + ADP + H(+). It participates in glycan biosynthesis; glycogen biosynthesis. Its function is as follows. Synthesizes alpha-1,4-glucan chains using ADP-glucose. This is Glycogen synthase from Chlorobium phaeovibrioides (strain DSM 265 / 1930) (Prosthecochloris vibrioformis (strain DSM 265)).